The sequence spans 547 residues: Sodium-coupled neutral amino acid transporter 4 (547 aa).

The tract at residues 1–34 (MDPMELNNVSIEPDGDSCSGDSIQDSYTGMENSD) is disordered. Topologically, residues 1–104 (MDPMELNNVS…GLSYAMANTG (104 aa)) are extracellular. Residues 19–31 (SGDSIQDSYTGME) are compositionally biased toward polar residues. At S49 the chain carries Phosphoserine. Residues 105–125 (IILFIIMLLTVAILSLYSVHL) form a helical membrane-spanning segment. Over 126 to 151 (LLKTAKEGGSLIYEKLGEKAFGWPGK) the chain is Cytoplasmic. A helical transmembrane segment spans residues 152 to 172 (IGAFISITMQNIGAMSSYLFI). The Extracellular portion of the chain corresponds to 173 to 195 (IKYELPEVIRAFMGLEENTGEWY). Residues 196–216 (LNGNYLVLFVSVGIILPLSLL) traverse the membrane as a helical segment. The Cytoplasmic portion of the chain corresponds to 217-220 (KNLG). The helical transmembrane segment at 221–241 (YLGYTSGFSLSCMVFFVSVVI) threads the bilayer. The Extracellular segment spans residues 242 to 332 (YKKFQIPCPL…PKYFVFNSRT (91 aa)). C249 and C321 are joined by a disulfide. Residues N260, N264, and N276 are each glycosylated (N-linked (GlcNAc...) asparagine). The helical transmembrane segment at 333-353 (AYAIPILAFAFVCHPEVLPIY) threads the bilayer. Residues 354–369 (SELKDRSRRKMQTVSN) are Cytoplasmic-facing. The helical transmembrane segment at 370–390 (ISISGMLVMYLLAALFGYLSF) threads the bilayer. Topologically, residues 391 to 411 (YGDVEDELLHAYSKVYTFDTA) are extracellular. The helical transmembrane segment at 412-432 (LLMVRLAVLVAVTLTVPIVLF) threads the bilayer. Residues 433–453 (PIRTSVITLLFPRKPFSWLKH) lie on the Cytoplasmic side of the membrane. The chain crosses the membrane as a helical span at residues 454 to 474 (FGIAAIIIALNNILVILVPTI). Residues 475–476 (KY) are Extracellular-facing. The helical transmembrane segment at 477 to 497 (IFGFIGASSATMLIFILPAAF) threads the bilayer. The Cytoplasmic segment spans residues 498-514 (YLKLVKKEPLRSPQKIG). The chain crosses the membrane as a helical span at residues 515–535 (ALVFLVTGIIFMMGSMALIIL). Over 536–547 (DWIYNPPNPNHH) the chain is Extracellular.

Belongs to the amino acid/polyamine transporter 2 family. In terms of processing, the disulfide bond plays an important role in substrate transport, but has no effect on trafficking to the cell surface. Detected in liver, in hepatocytes surrounding the central vein. Not detected in heart, kidney, brain, lung, small intestine, spleen and thymus. Highly expressed in placenta.

It localises to the cell membrane. The protein localises to the cell projection. It is found in the microvillus membrane. The catalysed reaction is L-alanine(in) + Na(+)(in) = L-alanine(out) + Na(+)(out). It carries out the reaction L-methionine(in) + Na(+)(in) = L-methionine(out) + Na(+)(out). The enzyme catalyses L-asparagine(in) + Na(+)(in) = L-asparagine(out) + Na(+)(out). It catalyses the reaction L-threonine(in) + Na(+)(in) = L-threonine(out) + Na(+)(out). The catalysed reaction is L-serine(in) + Na(+)(in) = L-serine(out) + Na(+)(out). It carries out the reaction glycine(in) + Na(+)(in) = glycine(out) + Na(+)(out). The enzyme catalyses L-glutamine(in) + Na(+)(in) = L-glutamine(out) + Na(+)(out). It catalyses the reaction L-histidine(in) + Na(+)(in) = L-histidine(out) + Na(+)(out). The catalysed reaction is L-cysteine(in) + Na(+)(in) = L-cysteine(out) + Na(+)(out). It carries out the reaction L-proline(in) + Na(+)(in) = L-proline(out) + Na(+)(out). Functionally, symporter that cotransports neutral amino acids and sodium ions from the extraccellular to the intracellular side of the cell membrane. The transport is electrogenic, pH dependent and partially tolerates substitution of Na(+) by Li(+). Preferentially transports smaller amino acids, such as glycine, L-alanine, L-serine, L-asparagine and L-threonine, followed by L-cysteine, L-histidine, L-proline and L-glutamine and L-methionine. In Mus musculus (Mouse), this protein is Sodium-coupled neutral amino acid transporter 4.